The sequence spans 89 residues: Small ribosomal subunit protein bS20 (89 aa).

The tract at residues 1 to 20 is disordered; sequence MANHKSAEKRARQTIKRTER.

The protein belongs to the bacterial ribosomal protein bS20 family.

Its function is as follows. Binds directly to 16S ribosomal RNA. The chain is Small ribosomal subunit protein bS20 from Campylobacter curvus (strain 525.92).